The following is a 156-amino-acid chain: SsrA-binding protein (156 aa).

Belongs to the SmpB family.

The protein localises to the cytoplasm. Functionally, required for rescue of stalled ribosomes mediated by trans-translation. Binds to transfer-messenger RNA (tmRNA), required for stable association of tmRNA with ribosomes. tmRNA and SmpB together mimic tRNA shape, replacing the anticodon stem-loop with SmpB. tmRNA is encoded by the ssrA gene; the 2 termini fold to resemble tRNA(Ala) and it encodes a 'tag peptide', a short internal open reading frame. During trans-translation Ala-aminoacylated tmRNA acts like a tRNA, entering the A-site of stalled ribosomes, displacing the stalled mRNA. The ribosome then switches to translate the ORF on the tmRNA; the nascent peptide is terminated with the 'tag peptide' encoded by the tmRNA and targeted for degradation. The ribosome is freed to recommence translation, which seems to be the essential function of trans-translation. The protein is SsrA-binding protein of Clostridium botulinum (strain Loch Maree / Type A3).